The following is a 110-amino-acid chain: Insulin-2 (110 aa).

A signal peptide spans 1–24; that stretch reads MALWMRFLPLLALLFLWESHPTQA. 3 disulfide bridges follow: cysteine 31–cysteine 96, cysteine 43–cysteine 109, and cysteine 95–cysteine 100. Positions 57–87 are cleaved as a propeptide — c peptide; that stretch reads EVEDPQVAQLELGGGPGAGDLQTLALEVAQQ.

The protein belongs to the insulin family. As to quaternary structure, heterodimer of a B chain and an A chain linked by two disulfide bonds.

The protein localises to the secreted. Functionally, insulin decreases blood glucose concentration. It increases cell permeability to monosaccharides, amino acids and fatty acids. It accelerates glycolysis, the pentose phosphate cycle, and glycogen synthesis in liver. In Mus musculus (Mouse), this protein is Insulin-2 (Ins2).